A 230-amino-acid polypeptide reads, in one-letter code: Cysteine S-methyltransferase OspZ (230 aa).

Residues 49–52 (GITR) are interaction with host proteins TAB2, TAB3 and ZRANB3. Residues Ala92, Ser98, Arg107, Gln111, Tyr204, and Glu208 each coordinate S-adenosyl-L-methionine.

Belongs to the NleE/OspZ family. As to quaternary structure, monomer.

It is found in the secreted. The protein resides in the host cytoplasm. The protein localises to the host nucleus. It catalyses the reaction L-cysteinyl-[protein] + S-adenosyl-L-methionine = S-methyl-L-cysteinyl-[protein] + S-adenosyl-L-homocysteine + H(+). In terms of biological role, cysteine methyltransferase effector that inhibits host cell NF-kappa-B activation by preventing nuclear translocation of host protein RELA/p65. Acts by mediating cysteine methylation of host proteins TAB2 and TAB3: methylation of a conserved cysteine residue of the RanBP2-type zinc finger (NZF) of TAB2 and TAB3 disrupts zinc-binding, thereby inactivating the ubiquitin chain-binding activity of TAB2 and TAB3, leading to NF-kappa-B inactivation. Also mediates cysteine methylation of host protein ZRANB3, inactivating its ability to bind ubiquitin chains. The polypeptide is Cysteine S-methyltransferase OspZ (Shigella boydii).